The primary structure comprises 352 residues: Peptide chain release factor 1 (352 aa).

At Q233 the chain carries N5-methylglutamine. A disordered region spans residues 288–309 (NAKDRKEQVGSGDRSERIRTYN). Basic and acidic residues predominate over residues 289–306 (AKDRKEQVGSGDRSERIR).

It belongs to the prokaryotic/mitochondrial release factor family. Post-translationally, methylated by PrmC. Methylation increases the termination efficiency of RF1.

Its subcellular location is the cytoplasm. Functionally, peptide chain release factor 1 directs the termination of translation in response to the peptide chain termination codons UAG and UAA. The chain is Peptide chain release factor 1 from Helicobacter pylori (strain G27).